A 616-amino-acid chain; its full sequence is Protein phosphatase EYA4 (616 aa).

M1 is modified (N-acetylmethionine). Disordered regions lie at residues 1 to 66 (MEDT…VTTN), 186 to 211 (SQTQSPLQSGCLSYSPGFSTPQPGQT), and 277 to 345 (ADGT…DSDL). Glycyl lysine isopeptide (Lys-Gly) (interchain with G-Cter in SUMO2) cross-links involve residues K14 and K52. A compositionally biased stretch (low complexity) spans 56 to 66 (SGLSSTSVTTN). Polar residues predominate over residues 277–311 (ADGTSSSTSTYQLQESLQGLTSQPGEFDTVQSPST). S338 carries the post-translational modification Phosphoserine. D352 (nucleophile) is an active-site residue. 3 residues coordinate Mg(2+): D352, D354, and D580. The Proton donor role is filled by D354.

The protein belongs to the HAD-like hydrolase superfamily. EYA family. As to quaternary structure, interacts with SIX3; translocates EYA4 from the cytoplasm to the nucleus and promotes activation of their target genes. Mg(2+) serves as cofactor. As to expression, in the embryo, expressed mainly in the craniofacial mesenchyme, dermamyotome and limb.

It localises to the cytoplasm. The protein resides in the nucleus. The catalysed reaction is O-phospho-L-tyrosyl-[protein] + H2O = L-tyrosyl-[protein] + phosphate. Tyrosine phosphatase that specifically dephosphorylates 'Tyr-142' of histone H2AX (H2AXY142ph). 'Tyr-142' phosphorylation of histone H2AX plays a central role in DNA repair and acts as a mark that distinguishes between apoptotic and repair responses to genotoxic stress. Promotes efficient DNA repair by dephosphorylating H2AX, promoting the recruitment of DNA repair complexes containing MDC1. Its function as histone phosphatase probably explains its role in transcription regulation during organogenesis. May be involved in development of the eye. In Mus musculus (Mouse), this protein is Protein phosphatase EYA4 (Eya4).